The following is a 198-amino-acid chain: Na(+)-translocating NADH-quinone reductase subunit E (198 aa).

Transmembrane regions (helical) follow at residues 11–31 (AVFV…FLAV), 35–55 (VSTA…SVPA), 77–97 (FLNF…LEMI), 109–129 (LGIF…VSFM), 140–160 (IVYG…LAGI), and 176–196 (LGIT…FAGV).

This sequence belongs to the NqrDE/RnfAE family. As to quaternary structure, composed of six subunits; NqrA, NqrB, NqrC, NqrD, NqrE and NqrF.

Its subcellular location is the cell inner membrane. It catalyses the reaction a ubiquinone + n Na(+)(in) + NADH + H(+) = a ubiquinol + n Na(+)(out) + NAD(+). Functionally, NQR complex catalyzes the reduction of ubiquinone-1 to ubiquinol by two successive reactions, coupled with the transport of Na(+) ions from the cytoplasm to the periplasm. NqrA to NqrE are probably involved in the second step, the conversion of ubisemiquinone to ubiquinol. The chain is Na(+)-translocating NADH-quinone reductase subunit E from Yersinia pestis bv. Antiqua (strain Nepal516).